The chain runs to 185 residues: Ribosome-recycling factor (185 aa).

It belongs to the RRF family.

Its subcellular location is the cytoplasm. Responsible for the release of ribosomes from messenger RNA at the termination of protein biosynthesis. May increase the efficiency of translation by recycling ribosomes from one round of translation to another. The chain is Ribosome-recycling factor from Hamiltonella defensa subsp. Acyrthosiphon pisum (strain 5AT).